The following is a 221-amino-acid chain: Molybdenum cofactor guanylyltransferase (221 aa).

GTP contacts are provided by residues 18 to 20 (IAG), Lys35, Asn63, Asp81, and Asp112. Position 112 (Asp112) interacts with Mg(2+).

It belongs to the MobA family. In terms of assembly, monomer. Requires Mg(2+) as cofactor.

The protein resides in the cytoplasm. The catalysed reaction is Mo-molybdopterin + GTP + H(+) = Mo-molybdopterin guanine dinucleotide + diphosphate. Functionally, transfers a GMP moiety from GTP to Mo-molybdopterin (Mo-MPT) cofactor (Moco or molybdenum cofactor) to form Mo-molybdopterin guanine dinucleotide (Mo-MGD) cofactor. The sequence is that of Molybdenum cofactor guanylyltransferase from Brucella abortus (strain S19).